The following is a 339-amino-acid chain: Putative adenosine/adenine deaminase (339 aa).

Zn(2+)-binding residues include His-16, His-18, and His-200. His-18 is a substrate binding site. Catalysis depends on Glu-203, which acts as the Proton donor. Position 281 (Asp-281) interacts with Zn(2+). A substrate-binding site is contributed by Asp-282.

It belongs to the metallo-dependent hydrolases superfamily. Adenosine and AMP deaminases family. Requires Zn(2+) as cofactor.

Putative nucleoside deaminase. May catalyze the hydrolytic deamination of adenosine or some similar substrate and play a role in purine metabolism. This Streptomyces virginiae (Streptomyces cinnamonensis) protein is Putative adenosine/adenine deaminase.